Consider the following 345-residue polypeptide: Dihydroorotate dehydrogenase (quinone) (345 aa).

FMN is bound by residues 65–69 and Thr89; that span reads AGLDK. Lys69 contacts substrate. 114–118 serves as a coordination point for substrate; the sequence is NRMGF. Asn142 and Asn175 together coordinate FMN. Asn175 lines the substrate pocket. The Nucleophile role is filled by Ser178. Asn180 contributes to the substrate binding site. Residues Lys220 and Thr248 each coordinate FMN. 249-250 contributes to the substrate binding site; sequence NT. FMN-binding positions include Gly271, Gly300, and 321-322; that span reads YT.

The protein belongs to the dihydroorotate dehydrogenase family. Type 2 subfamily. Monomer. The cofactor is FMN.

The protein resides in the cell membrane. It catalyses the reaction (S)-dihydroorotate + a quinone = orotate + a quinol. It functions in the pathway pyrimidine metabolism; UMP biosynthesis via de novo pathway; orotate from (S)-dihydroorotate (quinone route): step 1/1. Its function is as follows. Catalyzes the conversion of dihydroorotate to orotate with quinone as electron acceptor. In Burkholderia multivorans (strain ATCC 17616 / 249), this protein is Dihydroorotate dehydrogenase (quinone).